The primary structure comprises 230 residues: N-(5'-phosphoribosyl)anthranilate isomerase (230 aa).

It belongs to the TrpF family.

It carries out the reaction N-(5-phospho-beta-D-ribosyl)anthranilate = 1-(2-carboxyphenylamino)-1-deoxy-D-ribulose 5-phosphate. The protein operates within amino-acid biosynthesis; L-tryptophan biosynthesis; L-tryptophan from chorismate: step 3/5. This Trichodesmium erythraeum (strain IMS101) protein is N-(5'-phosphoribosyl)anthranilate isomerase.